Reading from the N-terminus, the 140-residue chain is Large ribosomal subunit protein uL11 (140 aa).

This sequence belongs to the universal ribosomal protein uL11 family. As to quaternary structure, part of the ribosomal stalk of the 50S ribosomal subunit. Interacts with L10 and the large rRNA to form the base of the stalk. L10 forms an elongated spine to which L12 dimers bind in a sequential fashion forming a multimeric L10(L12)X complex. Post-translationally, one or more lysine residues are methylated.

Its function is as follows. Forms part of the ribosomal stalk which helps the ribosome interact with GTP-bound translation factors. In Symbiobacterium thermophilum (strain DSM 24528 / JCM 14929 / IAM 14863 / T), this protein is Large ribosomal subunit protein uL11.